The primary structure comprises 966 residues: Leucine--tRNA ligase (966 aa).

A 'HIGH' region motif is present at residues 71–82 (PYPSGAGLHVGH). The tract at residues 561–580 (YSPRTFDPDDADTKPETPLS) is disordered. The segment covering 571-580 (ADTKPETPLS) has biased composition (basic and acidic residues). The 'KMSKS' region signature appears at 734-738 (KMGKS). Position 737 (Lys-737) interacts with ATP.

This sequence belongs to the class-I aminoacyl-tRNA synthetase family.

It is found in the cytoplasm. It catalyses the reaction tRNA(Leu) + L-leucine + ATP = L-leucyl-tRNA(Leu) + AMP + diphosphate. The chain is Leucine--tRNA ligase from Streptomyces coelicolor (strain ATCC BAA-471 / A3(2) / M145).